Reading from the N-terminus, the 367-residue chain is Histidinol-phosphate aminotransferase (367 aa).

Lys-221 bears the N6-(pyridoxal phosphate)lysine mark.

It belongs to the class-II pyridoxal-phosphate-dependent aminotransferase family. Histidinol-phosphate aminotransferase subfamily. In terms of assembly, homodimer. Pyridoxal 5'-phosphate is required as a cofactor.

It catalyses the reaction L-histidinol phosphate + 2-oxoglutarate = 3-(imidazol-4-yl)-2-oxopropyl phosphate + L-glutamate. Its pathway is amino-acid biosynthesis; L-histidine biosynthesis; L-histidine from 5-phospho-alpha-D-ribose 1-diphosphate: step 7/9. The protein is Histidinol-phosphate aminotransferase of Erythrobacter litoralis (strain HTCC2594).